A 174-amino-acid polypeptide reads, in one-letter code: Pectinesterase inhibitor 12 (174 aa).

An N-terminal signal peptide occupies residues 1 to 20 (MKFLVSLVIFSLFLNGFATA). 2 disulfide bridges follow: Cys-28–Cys-43 and Cys-100–Cys-140. Asn-129 carries an N-linked (GlcNAc...) asparagine glycan.

It belongs to the PMEI family.

It localises to the secreted. The protein localises to the extracellular space. The protein resides in the apoplast. Pectin methylesterase (PME) inhibitor involved in the maintenance of cell wall integrity in response to necrotrophic pathogens. Modulates PME activity and pectin methylesterification during infection by Botrytis cinerea and contributes to resistance against the pathogen. This is Pectinesterase inhibitor 12 from Arabidopsis thaliana (Mouse-ear cress).